We begin with the raw amino-acid sequence, 383 residues long: Nuclear hormone receptor family member nhr-217 (383 aa).

Positions Ile-53–Gln-127 form a DNA-binding region, nuclear receptor. 2 NR C4-type zinc fingers span residues Cys-56–Cys-77 and Cys-93–Cys-109. Residues Ile-172–Phe-383 enclose the NR LBD domain.

It belongs to the nuclear hormone receptor family.

The protein resides in the nucleus. Orphan nuclear receptor. In Caenorhabditis elegans, this protein is Nuclear hormone receptor family member nhr-217 (nhr-217).